Here is a 383-residue protein sequence, read N- to C-terminus: E3 ubiquitin-protein ligase Os04g0590900 (383 aa).

The helical transmembrane segment at 53 to 73 (PVFSPLVIAIIGVLASAFLLV) threads the bilayer. The tract at residues 105-129 (GGAGSGGRHGHGQSRSHESWNVSPP) is disordered. An RING-type; atypical zinc finger spans residues 157-199 (CSVCLGEFSDGESLRLLPRCSHAFHQQCIDTWLKSHSNCPLCR). 2 disordered regions span residues 269 to 291 (EANG…SSFD) and 320 to 383 (LLAG…DHPM).

It localises to the membrane. The enzyme catalyses S-ubiquitinyl-[E2 ubiquitin-conjugating enzyme]-L-cysteine + [acceptor protein]-L-lysine = [E2 ubiquitin-conjugating enzyme]-L-cysteine + N(6)-ubiquitinyl-[acceptor protein]-L-lysine.. It functions in the pathway protein modification; protein ubiquitination. In terms of biological role, possesses E3 ubiquitin-protein ligase in vitro. The polypeptide is E3 ubiquitin-protein ligase Os04g0590900 (Oryza sativa subsp. japonica (Rice)).